A 399-amino-acid polypeptide reads, in one-letter code: 1-deoxy-D-xylulose 5-phosphate reductoisomerase (399 aa).

Residues Thr10, Gly11, Ser12, Ile13, and Asn124 each coordinate NADPH. 1-deoxy-D-xylulose 5-phosphate is bound at residue Lys125. Glu126 serves as a coordination point for NADPH. Asp150 is a Mn(2+) binding site. Residues Ser151, Glu152, Ser186, and His209 each coordinate 1-deoxy-D-xylulose 5-phosphate. Glu152 serves as a coordination point for Mn(2+). Gly215 lines the NADPH pocket. The 1-deoxy-D-xylulose 5-phosphate site is built by Ser222, Asn227, Lys228, and Glu231. Glu231 contacts Mn(2+).

Belongs to the DXR family. Mg(2+) serves as cofactor. Mn(2+) is required as a cofactor.

The enzyme catalyses 2-C-methyl-D-erythritol 4-phosphate + NADP(+) = 1-deoxy-D-xylulose 5-phosphate + NADPH + H(+). It participates in isoprenoid biosynthesis; isopentenyl diphosphate biosynthesis via DXP pathway; isopentenyl diphosphate from 1-deoxy-D-xylulose 5-phosphate: step 1/6. Functionally, catalyzes the NADPH-dependent rearrangement and reduction of 1-deoxy-D-xylulose-5-phosphate (DXP) to 2-C-methyl-D-erythritol 4-phosphate (MEP). This chain is 1-deoxy-D-xylulose 5-phosphate reductoisomerase, found in Psychromonas ingrahamii (strain DSM 17664 / CCUG 51855 / 37).